The primary structure comprises 478 residues: Proline--tRNA ligase (478 aa).

It belongs to the class-II aminoacyl-tRNA synthetase family. ProS type 3 subfamily. In terms of assembly, homodimer.

The protein resides in the cytoplasm. The enzyme catalyses tRNA(Pro) + L-proline + ATP = L-prolyl-tRNA(Pro) + AMP + diphosphate. Functionally, catalyzes the attachment of proline to tRNA(Pro) in a two-step reaction: proline is first activated by ATP to form Pro-AMP and then transferred to the acceptor end of tRNA(Pro). This is Proline--tRNA ligase from Clostridium botulinum (strain Loch Maree / Type A3).